The following is a 776-amino-acid chain: 5-methyltetrahydropteroyltriglutamate--homocysteine methyltransferase (776 aa).

5-methyltetrahydropteroyltri-L-glutamate contacts are provided by residues 13–16 (RELK) and Lys127. L-homocysteine is bound by residues 450–452 (IGS) and Glu503. L-methionine is bound by residues 450 to 452 (IGS) and Glu503. Trp580 serves as a coordination point for 5-methyltetrahydropteroyltri-L-glutamate. Position 618 (Asp618) interacts with L-homocysteine. L-methionine is bound at residue Asp618. Glu624 contacts 5-methyltetrahydropteroyltri-L-glutamate. Residues His660, Cys662, and Glu684 each contribute to the Zn(2+) site. The active-site Proton donor is the His713. Residue Cys745 participates in Zn(2+) binding.

Belongs to the vitamin-B12 independent methionine synthase family. Zn(2+) is required as a cofactor.

It carries out the reaction 5-methyltetrahydropteroyltri-L-glutamate + L-homocysteine = tetrahydropteroyltri-L-glutamate + L-methionine. It functions in the pathway amino-acid biosynthesis; L-methionine biosynthesis via de novo pathway; L-methionine from L-homocysteine (MetE route): step 1/1. Its function is as follows. Catalyzes the transfer of a methyl group from 5-methyltetrahydrofolate to homocysteine resulting in methionine formation. This is 5-methyltetrahydropteroyltriglutamate--homocysteine methyltransferase from Mesorhizobium japonicum (strain LMG 29417 / CECT 9101 / MAFF 303099) (Mesorhizobium loti (strain MAFF 303099)).